Here is a 331-residue protein sequence, read N- to C-terminus: L-lactate dehydrogenase A chain (331 aa).

Residues 29 to 57 (GMVG…MEDK) and arginine 98 each bind NAD(+). Residues arginine 105, asparagine 137, and arginine 168 each contribute to the substrate site. Position 137 (asparagine 137) interacts with NAD(+). Residue histidine 192 is the Proton acceptor of the active site. Threonine 247 lines the substrate pocket.

It belongs to the LDH/MDH superfamily. LDH family. In terms of assembly, homotetramer.

The protein resides in the cytoplasm. It carries out the reaction (S)-lactate + NAD(+) = pyruvate + NADH + H(+). It participates in fermentation; pyruvate fermentation to lactate; (S)-lactate from pyruvate: step 1/1. Functionally, interconverts simultaneously and stereospecifically pyruvate and lactate with concomitant interconversion of NADH and NAD(+). In Notothenia angustata (Rockcod), this protein is L-lactate dehydrogenase A chain (ldha).